Consider the following 425-residue polypeptide: Probable mannosyltransferase KTR2 (425 aa).

Topologically, residues 1 to 13 (MQICKVFLTQVKK) are cytoplasmic. A helical; Signal-anchor for type II membrane protein transmembrane segment spans residues 14–33 (LLFVSLLFCLIAQTCWLALV). The tract at residues 34 to 89 (PYQRQLSLDSYFFRRSREVSSRYDFTRRRHMNQTLKLSSNTYNDEPLNKTKGIKNQ) is stem region. The Lumenal segment spans residues 34 to 425 (PYQRQLSLDS…SGKYFLKHDS (392 aa)). Asn-65, Asn-81, Asn-92, and Asn-167 each carry an N-linked (GlcNAc...) asparagine glycan. Residues 90-425 (RENATLLMLV…SGKYFLKHDS (336 aa)) are catalytic. Glu-313 serves as the catalytic Nucleophile.

Belongs to the glycosyltransferase 15 family.

It localises to the golgi apparatus membrane. The protein operates within protein modification; protein glycosylation. Its function is as follows. Involved in N-linked glycosylation. Transfers an alpha-D-mannosyl residue from GDP-mannose into lipid-linked oligosaccharide, forming an alpha-(1-&gt;2)-D-mannosyl-D-mannose linkage. The polypeptide is Probable mannosyltransferase KTR2 (KTR2) (Saccharomyces cerevisiae (strain ATCC 204508 / S288c) (Baker's yeast)).